Consider the following 373-residue polypeptide: WAT1-related protein At4g30420 (373 aa).

A run of 10 helical transmembrane segments spans residues 2 to 22 (AMTMIQLCYAGVTLFARATLV), 29 to 49 (VFILYRQAFATIFIFPFLYLS), 55 to 75 (IAISSLDLKSFSLIFLVSLIG), 94 to 114 (MGSAVGNIIPAITFLISFLAG), 125 to 145 (GLAKIAGTILCVAGAISMTLL), 173 to 193 (WLIGCLFLFSSTLCWSFWLIL), 205 to 225 (LSLSAWMCLFGTIQCAVVTFF), 244 to 264 (CLYAGIGASALSFTVQAWAIA), 270 to 290 (FSALFNPLCTVIVTILAALFF), and 294 to 314 (IYTGSLIGGLGVILGLYTVLW). 2 consecutive EamA domains span residues 9–135 (CYAG…TILC) and 186–313 (CWSF…YTVL).

Belongs to the drug/metabolite transporter (DMT) superfamily. Plant drug/metabolite exporter (P-DME) (TC 2.A.7.4) family.

The protein localises to the membrane. The protein is WAT1-related protein At4g30420 of Arabidopsis thaliana (Mouse-ear cress).